Here is a 138-residue protein sequence, read N- to C-terminus: ATP synthase epsilon chain (138 aa).

Residues 89–114 are compositionally biased toward basic and acidic residues; it reads KDTAQQEWNEAQKRLDEASKSGDRQK. Positions 89 to 117 are disordered; sequence KDTAQQEWNEAQKRLDEASKSGDRQKQIQ.

Belongs to the ATPase epsilon chain family. In terms of assembly, F-type ATPases have 2 components, CF(1) - the catalytic core - and CF(0) - the membrane proton channel. CF(1) has five subunits: alpha(3), beta(3), gamma(1), delta(1), epsilon(1). CF(0) has three main subunits: a, b and c.

It is found in the cellular thylakoid membrane. Functionally, produces ATP from ADP in the presence of a proton gradient across the membrane. This Gloeothece citriformis (strain PCC 7424) (Cyanothece sp. (strain PCC 7424)) protein is ATP synthase epsilon chain.